We begin with the raw amino-acid sequence, 378 residues long: Cyclic di-GMP phosphodiesterase response regulator RpfG (378 aa).

Residues 29 to 147 (NIVIVDDQMS…ELRARCSNLL (119 aa)) form the Response regulatory domain. Residue Asp80 is modified to 4-aspartylphosphate. The 198-residue stretch at 174–371 (VEERERETLS…LEQICGQFST (198 aa)) folds into the HD-GYP domain.

In terms of assembly, interacts with a subset of GGDEF domain-containing proteins. Phosphorylated and activated by RpfC.

The protein localises to the cytoplasm. It catalyses the reaction 3',3'-c-di-GMP + 2 H2O = 2 GMP + 2 H(+). Member of the two-component regulatory system RpfG/RpfC, which is involved in the perception and response to the diffusible signaling factor (DSF), which is essential for cell-cell signaling. Detection of DSF leads to the positive regulation of biofilm dispersal and the production of virulence factors. Activated RpfG degrades cyclic di-GMP to GMP, leading to the activation of Clp, a global transcriptional regulator that regulates a large set of genes in DSF pathway. May also directly control genes involved in biofilm dispersal. The protein is Cyclic di-GMP phosphodiesterase response regulator RpfG (rpfG) of Xanthomonas campestris pv. campestris (strain 8004).